The primary structure comprises 1450 residues: Sister chromatid cohesion protein PDS5 homolog (1450 aa).

Disordered stretches follow at residues 1 to 145, 680 to 707, and 1340 to 1450; these read MATR…KETK, VGGSTTPTSKKSQPPQQQQQQQQQQQQQ, and LPPL…EVEN. The segment covering 45-59 has biased composition (acidic residues); that stretch reads DDGELDSDIDEEDES. A compositionally biased stretch (low complexity) spans 77–138; that stretch reads KTQQQPQKSI…TSSSSQQSTQ (62 aa). The stretch at 650–716 forms a coiled coil; sequence KQLFKKYLEE…QLQQPENDIE (67 aa). The span at 682–691 shows a compositional bias: polar residues; sequence GSTTPTSKKS. Low complexity-rich tracts occupy residues 692–707 and 1350–1363; these read QPPQQQQQQQQQQQQQ and NNNNNNNNTNSTNN. Positions 1369–1378 are enriched in basic and acidic residues; sequence DENNNNKNDN. Residues 1387-1401 are compositionally biased toward low complexity; sequence NSTTAVPQKSIISKP. A compositionally biased stretch (basic residues) spans 1402 to 1427; the sequence is PAKKVSKKAAAKQKSPKKKTNKKKKQ. Over residues 1430 to 1450 the composition is skewed to acidic residues; sequence SEEEVSSSEEEDESQDEEVEN.

This sequence belongs to the PDS5 family.

The protein localises to the nucleus. Functionally, may regulate sister chromatid cohesion during mitosis and couple it to DNA replication. The protein is Sister chromatid cohesion protein PDS5 homolog of Dictyostelium discoideum (Social amoeba).